The primary structure comprises 310 residues: Cytosolic Fe-S cluster assembly factor Nubp1 homolog (310 aa).

The [4Fe-4S] cluster site is built by Cys8, Cys22, Cys25, and Cys31. ATP is bound at residue 62-69 (GKGGVGKS). 2 residues coordinate [4Fe-4S] cluster: Cys239 and Cys242.

It belongs to the Mrp/NBP35 ATP-binding proteins family. NUBP1/NBP35 subfamily. In terms of assembly, heterotetramer of 2 Nubp1 and 2 Nubp2 chains. The cofactor is [4Fe-4S] cluster.

Its subcellular location is the cytoplasm. In terms of biological role, component of the cytosolic iron-sulfur (Fe/S) protein assembly (CIA) machinery. Required for maturation of extramitochondrial Fe-S proteins. The Nubp1-Nubp2 heterotetramer forms a Fe-S scaffold complex, mediating the de novo assembly of an Fe-S cluster and its transfer to target apoproteins. This chain is Cytosolic Fe-S cluster assembly factor Nubp1 homolog, found in Drosophila ananassae (Fruit fly).